A 623-amino-acid chain; its full sequence is Leucine-rich repeat, immunoglobulin-like domain and transmembrane domain-containing protein 1 (623 aa).

An N-terminal signal peptide occupies residues 1-21 (MRVALGMLWLLALAWPPQARG). Residues 22–59 (FCPSQCSCSLHIMGDGSKARTVVCNDPDMTLPPASIPP) enclose the LRRNT domain. Residues 22-526 (FCPSQCSCSL…EVVDAENTQQ (505 aa)) are Lumenal-facing. 5 LRR repeats span residues 60 to 81 (DTSRLRLERTAIRRVPGEAFRP), 84 to 105 (RLEQLWLPYNALSELNALMLRG), 108 to 129 (RLRELRLPGNRLAAFPWAALRD), 132 to 153 (KLRLLDLQANRLSAVPAEAARF), and 156 to 177 (NLTFLDLSSNQLMRLPQELIVS). N156 carries N-linked (GlcNAc...) asparagine glycosylation. An LRRCT domain is found at 201-253 (NPWACDCRLYDLVHLLDGWAPNLAFIETELRCASPRSLAGVAFSQLELRKCQG). One can recognise an Ig-like C2-type domain in the interval 266–335 (LLGGTALLRC…YICQAKNFLG (70 aa)). C275 and C328 are disulfide-bonded. N-linked (GlcNAc...) asparagine glycosylation is found at N296 and N455. One can recognise a Fibronectin type-III domain in the interval 430–518 (MVRSVKVVGD…QCVIFSTNEV (89 aa)). A helical membrane pass occupies residues 527–547 (LINVVVISVAIVIALPLTLLV). Topologically, residues 548 to 623 (CCSALQKRCR…GGRRINEYFC (76 aa)) are cytoplasmic. Residues 571-594 (YVNLERLGYSEDGLEELSRHSVSE) form an LRR 6 repeat.

As to quaternary structure, may form a homodimer. Interacts with LRIT2; may form a heterodimer with LRIT2. Interacts (via its N-terminal extracellular domain) with metabotropic glutamate receptor GRM6. Interacts (via its extreme C-terminus) with the scaffold protein FRMPD2 (via the third PDZ domain); the interaction leads to their colocalization in photoreceptor synapses.

The protein resides in the endoplasmic reticulum membrane. The protein localises to the cell projection. It is found in the dendrite. Photoreceptor synaptic protein essential for normal vision. Involved in synapse formation in cone photoreceptor cells. The polypeptide is Leucine-rich repeat, immunoglobulin-like domain and transmembrane domain-containing protein 1 (LRIT1) (Homo sapiens (Human)).